Reading from the N-terminus, the 1182-residue chain is Myosin IC heavy chain (1182 aa).

Positions 15–698 (EGLDDMTLLS…MLFSLEETRE (684 aa)) constitute a Myosin motor domain. Position 109-116 (109-116 (GESGAGKT)) interacts with ATP. The interval 571–593 (AAELVATLMKSTPHYIRTIKPND) is actin-binding. One can recognise a TH1 domain in the interval 774–957 (RNRFSMISVR…QFHIASGLPA (184 aa)). Disordered regions lie at residues 999-1052 (KPAP…PAPG) and 1064-1103 (SKPL…PAGQ). A compositionally biased stretch (low complexity) spans 1013–1042 (KKPAPTAPGGAPMMKKPAPAPGGAPMMKKP). Pro residues predominate over residues 1081-1092 (PTAPGGPAPAGA). Residues 1123–1182 (PPPQQYIALYEYDAMQPDELTFKENDVINLIKKVDADWWQGELVRTKQIGMLPSNYVQQI) enclose the SH3 domain.

The protein belongs to the TRAFAC class myosin-kinesin ATPase superfamily. Myosin family. As to quaternary structure, myosin I heavy chain is single-headed. Dimer of a heavy and a light chain. Inability to self-assemble into filaments.

The protein localises to the cell projection. The protein resides in the lamellipodium. Its function is as follows. Myosin is a protein that binds to actin and has ATPase activity that is activated by actin. Involved in the process of phagocytosis and appears to support streaming behavior. The polypeptide is Myosin IC heavy chain (myoC) (Dictyostelium discoideum (Social amoeba)).